A 313-amino-acid polypeptide reads, in one-letter code: Short-chain dehydrogenase/reductase family 9C member 7 (313 aa).

An NADP(+)-binding site is contributed by 29–53; it reads FITGCDSGFGNLLARQLVDRGMRVL. Residue Ser-160 coordinates substrate. The active-site Proton acceptor is the Tyr-172. Phosphoserine is present on Ser-185.

It belongs to the short-chain dehydrogenases/reductases (SDR) family.

The protein resides in the cytoplasm. The catalysed reaction is a N-[omega-(9R,10R)-epoxy-(13R)-hydroxy-(11E)-octadecenoyloxy]acyl-beta-D-glucosyl-(1&lt;-&gt;1)-sphing-4E-enine + NAD(+) = a N-[omega-(9R,10R)-epoxy-13-oxo-(11E)-octadecenoyloxy]acyl-beta-D-glucosyl-(1&lt;-&gt;1)-sphing-4E-enine + NADH + H(+). It catalyses the reaction a N-[omega-(9R,10R)-epoxy-(13R)-hydroxy-(11E)-octadecenoyloxy]-acylsphing-4E-enine + NAD(+) = a N-[omega-(9R,10R)-epoxy-13-oxo-(11E)-octadecenoyloxy]-acylsphing-4E-enine + NADH + H(+). Functionally, plays a crucial role in the formation of the epidermal permeability barrier. Catalyzes the NAD+-dependent dehydrogenation of the linoleate 9,10-trans-epoxy-11E-13-alcohol esterified in omega-O-acylceramides (such as in N-[omega-(9R,10R)-epoxy-(13R)-hydroxy-(11E)-octadecenoyloxy]-acylsphing-4E-enine) to the corresponding 13-ketone, the reactive moiety required for binding of epidermal ceramides to proteins. Displays weak conversion of all-trans-retinal to all-trans-retinol in the presence of NADH. Has apparently no steroid dehydrogenase activity. This Bos taurus (Bovine) protein is Short-chain dehydrogenase/reductase family 9C member 7 (SDR9C7).